The primary structure comprises 374 residues: Chaperone protein DnaJ (374 aa).

A J domain is found at 5-70 (DYYEVLGVNL…RKRASYDQFG (66 aa)). The CR-type zinc-finger motif lies at 133-210 (GLSRTIKVPT…CHGQGRQQQT (78 aa)). Zn(2+) is bound by residues Cys-146, Cys-149, Cys-162, Cys-165, Cys-184, Cys-187, Cys-198, and Cys-201. CXXCXGXG motif repeat units follow at residues 146 to 153 (CKTCNGSG), 162 to 169 (CPRCNGSG), 184 to 191 (CSVCRGRG), and 198 to 205 (CTDCHGQG).

This sequence belongs to the DnaJ family. As to quaternary structure, homodimer. It depends on Zn(2+) as a cofactor.

The protein resides in the cytoplasm. Participates actively in the response to hyperosmotic and heat shock by preventing the aggregation of stress-denatured proteins and by disaggregating proteins, also in an autonomous, DnaK-independent fashion. Unfolded proteins bind initially to DnaJ; upon interaction with the DnaJ-bound protein, DnaK hydrolyzes its bound ATP, resulting in the formation of a stable complex. GrpE releases ADP from DnaK; ATP binding to DnaK triggers the release of the substrate protein, thus completing the reaction cycle. Several rounds of ATP-dependent interactions between DnaJ, DnaK and GrpE are required for fully efficient folding. Also involved, together with DnaK and GrpE, in the DNA replication of plasmids through activation of initiation proteins. The chain is Chaperone protein DnaJ from Coxiella burnetii (strain RSA 331 / Henzerling II).